The chain runs to 87 residues: Putative membrane protein insertion efficiency factor (87 aa).

It belongs to the UPF0161 family.

Its subcellular location is the cell membrane. In terms of biological role, could be involved in insertion of integral membrane proteins into the membrane. This chain is Putative membrane protein insertion efficiency factor, found in Ligilactobacillus salivarius (strain UCC118) (Lactobacillus salivarius).